Reading from the N-terminus, the 479-residue chain is Aspartyl/glutamyl-tRNA(Asn/Gln) amidotransferase subunit B (479 aa).

It belongs to the GatB/GatE family. GatB subfamily. Heterotrimer of A, B and C subunits.

The enzyme catalyses L-glutamyl-tRNA(Gln) + L-glutamine + ATP + H2O = L-glutaminyl-tRNA(Gln) + L-glutamate + ADP + phosphate + H(+). It carries out the reaction L-aspartyl-tRNA(Asn) + L-glutamine + ATP + H2O = L-asparaginyl-tRNA(Asn) + L-glutamate + ADP + phosphate + 2 H(+). Allows the formation of correctly charged Asn-tRNA(Asn) or Gln-tRNA(Gln) through the transamidation of misacylated Asp-tRNA(Asn) or Glu-tRNA(Gln) in organisms which lack either or both of asparaginyl-tRNA or glutaminyl-tRNA synthetases. The reaction takes place in the presence of glutamine and ATP through an activated phospho-Asp-tRNA(Asn) or phospho-Glu-tRNA(Gln). In Clostridium beijerinckii (strain ATCC 51743 / NCIMB 8052) (Clostridium acetobutylicum), this protein is Aspartyl/glutamyl-tRNA(Asn/Gln) amidotransferase subunit B.